Here is a 404-residue protein sequence, read N- to C-terminus: MPGLTCNACNMEFKDEEERNLHYKSDWHRYNLKRKVAGVPGVTEALFEARQSALAQEKNKSNEAPMLYTCAICAKGYRSSKAHEQHLQSRSHVLRVSQGTSINGEEDIAIIRQLPRRVQHRGSIDDDSEDEWVEVDSDEELAAEEASDSLSKLNVNESGSAEDMDDDGDADKYELDPTCCLMCDKKHKTLESCMLHMHKHHGFFIPDIEYLKDPEGLLTYLGLKVKRDFMCLYCNELCRPFSSLEAVRKHMEAKSHCKLHYGDGDDEEDAELEEFYDYSSSYVDEAGKQIVVSGETDNTVELVGGSELLITEKSENTTTSKTLGSREFMRYYRQKPRPTSQDSNQIIASLSSRYKSLGLKTVPSKEETLRMKVRKEMSKRGETMRTKIGVKSNVIRNLPNNVPY.

C2H2-type zinc fingers lie at residues 4–28 (LTCN…SDWH) and 68–92 (YTCA…SRSH). Positions 119–169 (QHRGSIDDDSEDEWVEVDSDEELAAEEASDSLSKLNVNESGSAEDMDDDGD) are disordered. Acidic residues-rich tracts occupy residues 125–147 (DDDS…EEAS) and 160–169 (SAEDMDDDGD). 2 C2H2-type zinc fingers span residues 178-201 (TCCL…HKHH) and 229-256 (FMCL…AKSH).

The protein belongs to the REI1 family. Can form homodimer. Interacts with RLP24, RPL24A, RPL24B, EBP1 and JJJ1.

It is found in the cytoplasm. Functionally, pre-60S-associated factor involved in the cytoplasmic maturation of the 60S subunit. Involved in the dissociation and recycling of other late pre-60S factors before newly synthesized large ribosomal subunits enter translation. Can complement the growth defect of a yeast mutant lacking REI1. Required for leaf growth under cold temperature conditions. This chain is Cytoplasmic 60S subunit biogenesis factor REI1 homolog 1, found in Arabidopsis thaliana (Mouse-ear cress).